We begin with the raw amino-acid sequence, 144 residues long: Transcriptional regulator MraZ (144 aa).

SpoVT-AbrB domains are found at residues 5–47 (EYDH…TLDE) and 76–119 (AVEV…DRET).

This sequence belongs to the MraZ family. Forms oligomers.

Its subcellular location is the cytoplasm. It is found in the nucleoid. The polypeptide is Transcriptional regulator MraZ (Staphylococcus aureus).